The chain runs to 321 residues: NADH-ubiquinone oxidoreductase chain 1 (321 aa).

Helical transmembrane passes span Leu-2–Leu-22, Ala-71–Ile-91, Leu-104–Ala-124, Leu-148–Ile-168, His-173–Ala-193, Leu-224–Phe-244, Ile-255–Ile-275, and Phe-295–Gly-315.

Belongs to the complex I subunit 1 family.

It is found in the mitochondrion inner membrane. It catalyses the reaction a ubiquinone + NADH + 5 H(+)(in) = a ubiquinol + NAD(+) + 4 H(+)(out). In terms of biological role, core subunit of the mitochondrial membrane respiratory chain NADH dehydrogenase (Complex I) that is believed to belong to the minimal assembly required for catalysis. Complex I functions in the transfer of electrons from NADH to the respiratory chain. The immediate electron acceptor for the enzyme is believed to be ubiquinone. This Lampetra fluviatilis (European river lamprey) protein is NADH-ubiquinone oxidoreductase chain 1 (MT-ND1).